The following is a 351-amino-acid chain: Phosphoribosylformylglycinamidine cyclo-ligase (351 aa).

The protein belongs to the AIR synthase family.

The protein resides in the cytoplasm. It catalyses the reaction 2-formamido-N(1)-(5-O-phospho-beta-D-ribosyl)acetamidine + ATP = 5-amino-1-(5-phospho-beta-D-ribosyl)imidazole + ADP + phosphate + H(+). The protein operates within purine metabolism; IMP biosynthesis via de novo pathway; 5-amino-1-(5-phospho-D-ribosyl)imidazole from N(2)-formyl-N(1)-(5-phospho-D-ribosyl)glycinamide: step 2/2. The polypeptide is Phosphoribosylformylglycinamidine cyclo-ligase (Xylella fastidiosa (strain 9a5c)).